Consider the following 24-residue polypeptide: FVVFILADPARYFQFYFPXFFQHR.

May mediate relaxation of depolarized colon tonus. It binds iodocyanopindolol and SM-11044. The sequence is that of SM-11044-binding protein from Rattus norvegicus (Rat).